A 169-amino-acid chain; its full sequence is Ribosome maturation factor RimP (169 aa).

This sequence belongs to the RimP family.

The protein localises to the cytoplasm. Required for maturation of 30S ribosomal subunits. The polypeptide is Ribosome maturation factor RimP (Koribacter versatilis (strain Ellin345)).